The chain runs to 236 residues: Small ribosomal subunit protein uS2c (236 aa).

This sequence belongs to the universal ribosomal protein uS2 family.

It localises to the plastid. The protein resides in the chloroplast. This is Small ribosomal subunit protein uS2c (rps2) from Cucumis sativus (Cucumber).